Here is a 585-residue protein sequence, read N- to C-terminus: GRR1-like protein 1 (585 aa).

The F-box domain occupies methionine 1–asparagine 48. Lysine 70 lines the 1D-myo-inositol hexakisphosphate pocket. Positions aspartate 77 to tyrosine 78 are interaction with auxin-responsive proteins. Residues lysine 109–arginine 110 and arginine 340 contribute to the 1D-myo-inositol hexakisphosphate site. The interval proline 343–leucine 348 is interaction with auxin-responsive proteins. Position 397–399 (cysteine 397–arginine 399) interacts with 1D-myo-inositol hexakisphosphate. The segment at cysteine 401–proline 405 is interaction with auxin-responsive proteins. Arginine 432 is a binding site for 1D-myo-inositol hexakisphosphate. Positions alanine 460–phenylalanine 461 are interaction with auxin-responsive proteins. 1D-myo-inositol hexakisphosphate contacts are provided by residues lysine 480–lysine 481 and arginine 505.

Part of a SCF (SKP1-cullin-F-box) protein ligase complex. Interacts with CUL1, SKP1A/ASK1 and SKP1B/ASK2. Interacts with Aux/IAA proteins (IAA7 and IAA12) in an auxin-dependent manner. In terms of tissue distribution, ubiquitous.

It localises to the nucleus. It functions in the pathway protein modification; protein ubiquitination. Component of SCF(ASK-cullin-F-box) E3 ubiquitin ligase complexes, which may mediate the ubiquitination and subsequent proteasomal degradation of target proteins. Auxin receptor that mediates Aux/IAA proteins proteasomal degradation and auxin-regulated transcription. Involved in embryogenesis regulation by auxin. Confers sensitivity to the virulent bacterial pathogen P.syringae. Mediates glucose repression in yeast. The protein is GRR1-like protein 1 (GRH1) of Arabidopsis thaliana (Mouse-ear cress).